Reading from the N-terminus, the 463-residue chain is tRNA (guanine(10)-N(2))-methyltransferase TRMT11 (463 aa).

Residue Ala2 is modified to N-acetylalanine.

The protein belongs to the class I-like SAM-binding methyltransferase superfamily. TRM11 methyltransferase family. As to quaternary structure, part of the heterodimeric TRMT11-TRM112 methyltransferase complex; this complex forms an active tRNA methyltransferase, where TRMT112 acts as an activator of the catalytic subunit TRMT11.

It localises to the cytoplasm. It catalyses the reaction guanosine(10) in tRNA + S-adenosyl-L-methionine = N(2)-methylguanosine(10) in tRNA + S-adenosyl-L-homocysteine + H(+). Its function is as follows. Catalytic subunit of the TRMT11-TRM112 methyltransferase complex, that specifically mediates the S-adenosyl-L-methionine-dependent N(2)-methylation of guanosine nucleotide at position 10 (m2G10) in tRNAs. This is one of the major tRNA (guanine-N(2))-methyltransferases. This chain is tRNA (guanine(10)-N(2))-methyltransferase TRMT11, found in Homo sapiens (Human).